A 177-amino-acid chain; its full sequence is Peptidyl-tRNA hydrolase 1 (177 aa).

Tyr18 lines the tRNA pocket. His23 functions as the Proton acceptor in the catalytic mechanism. The tRNA site is built by Phe65, Asn67, and Asn113.

This sequence belongs to the PTH family. In terms of assembly, monomer.

The protein resides in the cytoplasm. It catalyses the reaction an N-acyl-L-alpha-aminoacyl-tRNA + H2O = an N-acyl-L-amino acid + a tRNA + H(+). In terms of biological role, hydrolyzes ribosome-free peptidyl-tRNAs (with 1 or more amino acids incorporated), which drop off the ribosome during protein synthesis, or as a result of ribosome stalling. Functionally, catalyzes the release of premature peptidyl moieties from peptidyl-tRNA molecules trapped in stalled 50S ribosomal subunits, and thus maintains levels of free tRNAs and 50S ribosomes. The polypeptide is Peptidyl-tRNA hydrolase 1 (Corynebacterium glutamicum (strain ATCC 13032 / DSM 20300 / JCM 1318 / BCRC 11384 / CCUG 27702 / LMG 3730 / NBRC 12168 / NCIMB 10025 / NRRL B-2784 / 534)).